The chain runs to 366 residues: 1-deoxy-D-xylulose 5-phosphate reductoisomerase (366 aa).

Positions 7, 8, 9, 10, 31, 33, and 111 each coordinate NADPH. Lys112 is a 1-deoxy-D-xylulose 5-phosphate binding site. Glu113 provides a ligand contact to NADPH. A Mn(2+)-binding site is contributed by Asp131. 1-deoxy-D-xylulose 5-phosphate contacts are provided by Ser132, Glu133, Ser162, and His185. Residue Glu133 participates in Mn(2+) binding. An NADPH-binding site is contributed by Gly191. 4 residues coordinate 1-deoxy-D-xylulose 5-phosphate: Ser198, Asn203, Lys204, and Glu207. Glu207 contacts Mn(2+).

The protein belongs to the DXR family. The cofactor is Mg(2+). It depends on Mn(2+) as a cofactor.

The enzyme catalyses 2-C-methyl-D-erythritol 4-phosphate + NADP(+) = 1-deoxy-D-xylulose 5-phosphate + NADPH + H(+). It functions in the pathway isoprenoid biosynthesis; isopentenyl diphosphate biosynthesis via DXP pathway; isopentenyl diphosphate from 1-deoxy-D-xylulose 5-phosphate: step 1/6. In terms of biological role, catalyzes the NADPH-dependent rearrangement and reduction of 1-deoxy-D-xylulose-5-phosphate (DXP) to 2-C-methyl-D-erythritol 4-phosphate (MEP). The polypeptide is 1-deoxy-D-xylulose 5-phosphate reductoisomerase (Nautilia profundicola (strain ATCC BAA-1463 / DSM 18972 / AmH)).